The following is a 561-amino-acid chain: Potassium-transporting ATPase potassium-binding subunit (561 aa).

12 helical membrane-spanning segments follow: residues Leu5–Val25, Tyr60–Leu80, Val86–Val106, Gly131–Ile151, Ile177–Ser197, Pro247–Thr267, Leu281–Ala301, Phe324–Val344, Gly376–Gly396, Ala415–Leu435, Ala488–Ala508, and Gly537–Ala557.

It belongs to the KdpA family. In terms of assembly, the system is composed of three essential subunits: KdpA, KdpB and KdpC.

Its subcellular location is the cell membrane. Part of the high-affinity ATP-driven potassium transport (or Kdp) system, which catalyzes the hydrolysis of ATP coupled with the electrogenic transport of potassium into the cytoplasm. This subunit binds the extracellular potassium ions and delivers the ions to the membrane domain of KdpB through an intramembrane tunnel. The sequence is that of Potassium-transporting ATPase potassium-binding subunit from Rhodococcus opacus (strain B4).